A 266-amino-acid polypeptide reads, in one-letter code: Protein-ADP-ribose hydrolase (266 aa).

In terms of domain architecture, Macro spans 74–265 (TDLKDLKPIK…LYKEAFNRDA (192 aa)). Residues Asp93, Ile94, and Asn107 each contribute to the ADP-D-ribose site. 3 residues coordinate Zn(2+): Cys113, His118, and Cys120. ADP-D-ribose contacts are provided by Cys120, Ile121, Asp122, Ser212, Thr213, Gly214, and Phe216.

This sequence belongs to the MacroD-type family. Zn-Macro subfamily. The cofactor is Zn(2+).

It catalyses the reaction 4-O-(ADP-D-ribosyl)-L-aspartyl-[protein] + H2O = L-aspartyl-[protein] + ADP-D-ribose + H(+). In terms of biological role, ADP-ribosylhydrolase that specifically reverses the SirTM-mediated mono-ADP-ribosylation at an asparatate residue of GcvH-L, by releasing ADP-ribose from the target protein. May play a role in the regulation of the response to host-induced oxidative stress. The sequence is that of Protein-ADP-ribose hydrolase from Staphylococcus aureus (strain MSSA476).